The primary structure comprises 376 residues: 23S rRNA (uracil(747)-C(5))-methyltransferase RlmC (376 aa).

[4Fe-4S] cluster-binding residues include C3, C11, C14, and C87. Q212, F241, E262, and N307 together coordinate S-adenosyl-L-methionine. The active-site Nucleophile is C334.

It belongs to the class I-like SAM-binding methyltransferase superfamily. RNA M5U methyltransferase family. RlmC subfamily.

It catalyses the reaction uridine(747) in 23S rRNA + S-adenosyl-L-methionine = 5-methyluridine(747) in 23S rRNA + S-adenosyl-L-homocysteine + H(+). Functionally, catalyzes the formation of 5-methyl-uridine at position 747 (m5U747) in 23S rRNA. In Yersinia pseudotuberculosis serotype I (strain IP32953), this protein is 23S rRNA (uracil(747)-C(5))-methyltransferase RlmC.